Reading from the N-terminus, the 251-residue chain is RNA polymerase sigma factor SigI (251 aa).

The Polymerase core binding motif lies at 61 to 74 (DEFSIGLIAFNEAI). The segment at residues 206-225 (VKQLEQLVSVSRKTIERNRK) is a DNA-binding region (H-T-H motif).

This sequence belongs to the sigma-70 factor family. SigI subfamily. As to quaternary structure, interacts with RsgI.

It localises to the cytoplasm. Its activity is regulated as follows. Negatively regulated by the anti-sigma-I factor RsgI. Upon exposure to heat, SigI is released from RsgI and activated. Transient heat activation of SigI may depend upon DnaK chaperone. Sigma factors are initiation factors that promote the attachment of RNA polymerase to specific initiation sites and are then released. This sigma factor is involved in regulation of cell wall metabolism in response to heat stress. Acts by regulating the expression of genes such as bcrC, mreBH and lytE. Also plays a role in survival at low temperatures. The sequence is that of RNA polymerase sigma factor SigI from Bacillus subtilis (strain 168).